A 126-amino-acid chain; its full sequence is Small ribosomal subunit protein uS11 (126 aa).

The protein belongs to the universal ribosomal protein uS11 family. Part of the 30S ribosomal subunit. Interacts with proteins S7 and S18. Binds to IF-3.

Located on the platform of the 30S subunit, it bridges several disparate RNA helices of the 16S rRNA. Forms part of the Shine-Dalgarno cleft in the 70S ribosome. This chain is Small ribosomal subunit protein uS11, found in Treponema pallidum (strain Nichols).